The sequence spans 2349 residues: Reducing polyketide synthase hmp8 (2349 aa).

A Ketosynthase family 3 (KS3) domain is found at H9–A435. Residues C182, H317, and H357 each act as for beta-ketoacyl synthase activity in the active site. Positions F551–Y856 are malonyl-CoA:ACP transacylase (MAT) domain. The segment at R930–S1066 is N-terminal hotdog fold. The region spanning R930–K1250 is the PKS/mFAS DH domain. A dehydratase (DH) domain region spans residues L932–L1244. H962 serves as the catalytic Proton acceptor; for dehydratase activity. The tract at residues P1094–K1250 is C-terminal hotdog fold. The Proton donor; for dehydratase activity role is filled by D1160. An enoyl reductase (ER) domain region spans residues G1641 to L1953. The ketoreductase (KR) domain stretch occupies residues A1977–D2157. In terms of domain architecture, Carrier spans E2267–S2344. S2304 is subject to O-(pantetheine 4'-phosphoryl)serine.

The protein operates within secondary metabolite biosynthesis. In terms of biological role, reducing polyketide synthase; part of the gene cluster that mediates the biosynthesis of hypothemycin, a resorcylic acid lactone (RAL) that irreversibly inhibits a subset of protein kinases with a conserved cysteine in the ATP binding site such as human ERK2. The first step is performed by both PKSs hmp3 and hmp8 and leads to the production of 7',8'-dehydrozearalenol (DHZ). The highly reducing PKS hpm8 synthesizes the reduced hexaketide (7S,11S,2E,8E)-7,11-dihydroxy-dodeca-2,8-dienoate, which is transferred downstream to the non-reducing PKS hpm3. Hpm3 then extends the reduced hexaketide to a nonaketide, after which regioselective cyclization and macrolactonization affords DHZ. The next step is the conversion of DHZ into aigialomycin C and is performed by the O-methyltransferase hmp5, the FAD-binding monooxygenase hmp7, and the cytochrome P450 monooxygenase hmp1. The wide substrate tolerance of the hmp5 and hmp7 implies that the reactions from DHZ to aigialomycin C can occur in any order. The steps from aigialomycin C to hypothemycin are less well established. The FAD-linked oxidoreductase hmp9 presumably catalyzes oxidation of the C-6' hydroxyl to a ketone. The timing of this oxidation is important, since the resulting enone functional group is a Michael acceptor that can react spontaneously with glutathione, an abundant metabolite in fungal cells. The glutathione S-transferase hmp2 catalyzes cis-trans isomerization of the 7',8' double bond with equilibrium favoring the trans isomer. The hpm6-encoded transporter might preferentially pump hypothemycin out of the cell relative to the trans isomer aigialomycin A. The cis-to-trans isomerization may be coupled with C-4' hydroxylation, since all known hypothemycin analogs containing the enone functional group also have hydroxyl groups at both C-4' and C-5'. This Hypomyces subiculosus (Nectria subiculosa) protein is Reducing polyketide synthase hmp8.